Reading from the N-terminus, the 388-residue chain is Succinate--CoA ligase [ADP-forming] subunit beta (388 aa).

The 236-residue stretch at 9 to 244 (KEILRKFGVA…PDEEDPKETQ (236 aa)) folds into the ATP-grasp domain. ATP is bound by residues Lys46, 53–55 (GRG), Glu99, Cys102, and Glu107. Residues Asn199 and Asp213 each contribute to the Mg(2+) site. Substrate contacts are provided by residues Asn264 and 321 to 323 (GIM).

The protein belongs to the succinate/malate CoA ligase beta subunit family. As to quaternary structure, heterotetramer of two alpha and two beta subunits. Mg(2+) serves as cofactor.

It catalyses the reaction succinate + ATP + CoA = succinyl-CoA + ADP + phosphate. It carries out the reaction GTP + succinate + CoA = succinyl-CoA + GDP + phosphate. It functions in the pathway carbohydrate metabolism; tricarboxylic acid cycle; succinate from succinyl-CoA (ligase route): step 1/1. Functionally, succinyl-CoA synthetase functions in the citric acid cycle (TCA), coupling the hydrolysis of succinyl-CoA to the synthesis of either ATP or GTP and thus represents the only step of substrate-level phosphorylation in the TCA. The beta subunit provides nucleotide specificity of the enzyme and binds the substrate succinate, while the binding sites for coenzyme A and phosphate are found in the alpha subunit. The protein is Succinate--CoA ligase [ADP-forming] subunit beta of Anaeromyxobacter dehalogenans (strain 2CP-C).